Consider the following 410-residue polypeptide: MTKLVRGFRDIFAPESNNFAELEACARRVFTLAGGTEVRIPTLELKELFIKSTGDTTDIVQKEMYAFEDAGGRVLAMRPEGTPGTVRAYIENNFAQTAPVQKLFYIGNMFRAERPQAGRYREFEQIGMEYIGNPSPAADAEIILMIKDIVTSFGVKNYGVKINSLGCQECRPAYKQELINYLKKDFDTLCEKCKDRLEKNPLRVLDCKIDGARFKENAPKQKLCAACENHFNEVKTFLQGRIDYIIDPSLVRGLDYYTRTVFEFQAGDSAQNAIAGGGRYDSLVKSMGGADMPAVGFAMGVERTIAARGETKDNKQNKIFVVSLDKNCNAKAFEIMSLLRSAGVICDGGLFDKNLKAQMKQADRTKSSFALLLGADEFEKGVVTMRDLSSGEQQEIKFNDILNKVGKIRL.

It belongs to the class-II aminoacyl-tRNA synthetase family. As to quaternary structure, homodimer.

Its subcellular location is the cytoplasm. The catalysed reaction is tRNA(His) + L-histidine + ATP = L-histidyl-tRNA(His) + AMP + diphosphate + H(+). The chain is Histidine--tRNA ligase from Elusimicrobium minutum (strain Pei191).